Consider the following 403-residue polypeptide: Na(+)/H(+) antiporter NhaH (403 aa).

The Cytoplasmic segment spans residues 1–6; that stretch reads MHGFHD. The chain crosses the membrane as a helical span at residues 7–27; it reads VFIQILLLLAISVSVIAIAKL. Topologically, residues 28–30 are extracellular; the sequence is LKE. The chain crosses the membrane as a helical span at residues 31–51; sequence PDSIALVLVGLVLGLTELPII. Over 52–65 the chain is Cytoplasmic; the sequence is EDAERYITQSEVFQ. The helical transmembrane segment at 66 to 86 threads the bilayer; sequence ATIISLFLPILLGDATLKLPF. Residues 87–98 are Extracellular-facing; the sequence is HHLFSQKKTVLG. A helical transmembrane segment spans residues 99–119; it reads LAFVGTFVSSICIGTAAYFLL. Topologically, residues 120 to 124 are cytoplasmic; that stretch reads DLPLA. Residues 125–145 form a helical membrane-spanning segment; that stretch reads VAFTFAALMSATDPISVLSIF. Residues 146-167 lie on the Extracellular side of the membrane; the sequence is KSLGVPQKMSTVMEGESLFNDG. A helical transmembrane segment spans residues 168-188; sequence IAVVLFKIASIYLLTYMEMGW. Topologically, residues 189–195 are cytoplasmic; sequence AGLGSGV. The helical transmembrane segment at 196–216 threads the bilayer; it reads FLFLKFAIGGALVGLVLGYFF. Residues 217–218 lie on the Extracellular side of the membrane; the sequence is SQ. A helical membrane pass occupies residues 219–239; the sequence is VIRVFDDYPLEVAFSALLFFG. The Cytoplasmic portion of the chain corresponds to 240-241; the sequence is SY. A helical transmembrane segment spans residues 242-262; sequence FIAEHFHTSGVIAVVVGGFVF. Topologically, residues 263–281 are extracellular; that stretch reads GDYGAKIGMSKETKTNINT. The chain crosses the membrane as a helical span at residues 282-302; it reads FWDSVTLIANALIFLMVGLEI. Over 303–310 the chain is Cytoplasmic; sequence RNIDLAGN. A helical transmembrane segment spans residues 311–331; that stretch reads WGVIVGAILIVLVGRTIAVYL. The Extracellular portion of the chain corresponds to 332–372; the sequence is GTGWVQELSSKERLLINWGGLRGSLSVALALSLPMDFAGRD. The helical transmembrane segment at 373–393 threads the bilayer; the sequence is QVLLLTFSVVLFSLIVQGLTL. Residues 394 to 403 are Cytoplasmic-facing; it reads KPLIKKLGMI.

Belongs to the monovalent cation:proton antiporter 1 (CPA1) transporter (TC 2.A.36) family.

It localises to the cell membrane. Its function is as follows. Na(+)/H(+) antiporter that extrudes sodium in exchange for external protons. Can also transport lithium. This Halobacillus dabanensis protein is Na(+)/H(+) antiporter NhaH (nhaH).